We begin with the raw amino-acid sequence, 250 residues long: Large ribosomal subunit protein uL30 (250 aa).

Belongs to the universal ribosomal protein uL30 family.

The protein is Large ribosomal subunit protein uL30 (RPL7) of Yarrowia lipolytica (strain CLIB 122 / E 150) (Yeast).